The primary structure comprises 249 residues: Acetate transporter protein patA (249 aa).

6 helical membrane-spanning segments follow: residues 42-62, 71-91, 106-126, 141-161, 169-189, and 202-222; these read IGSPTALGMGAFAIAFTTLSM, AITNAYIGNCFFTAGMGLVLV, VFGGFGLFNLAFGAINAPAFG, AIGYFLLVWGIFVLFFTVAAM, GMLGTSQITYTLLAASYFSFA, and AAGAFGFVSGLFAWYTVGHLM.

Belongs to the acetate uptake transporter (AceTr) (TC 2.A.96) family.

It is found in the endoplasmic reticulum membrane. Its pathway is mycotoxin biosynthesis; patulin biosynthesis. Its function is as follows. Acetate transporter protein; part of the gene cluster that mediates the biosynthesis of patulin, an acetate-derived tetraketide mycotoxin produced by several fungal species that shows antimicrobial properties against several bacteria. May be involved in the uptake of acetate, a substrate for the synthesis of 6-methylsalicylic acid by the polyketide synthase patK. This chain is Acetate transporter protein patA, found in Penicillium expansum (Blue mold rot fungus).